The following is a 353-amino-acid chain: Quinolinate synthase (353 aa).

The iminosuccinate site is built by histidine 49 and serine 70. Cysteine 115 serves as a coordination point for [4Fe-4S] cluster. Iminosuccinate is bound by residues 141–143 (YAN) and serine 158. Cysteine 202 contributes to the [4Fe-4S] cluster binding site. Residues 228 to 230 (HPE) and threonine 245 each bind iminosuccinate. Residue cysteine 299 coordinates [4Fe-4S] cluster.

This sequence belongs to the quinolinate synthase family. Type 1 subfamily. Requires [4Fe-4S] cluster as cofactor.

The protein localises to the cytoplasm. The catalysed reaction is iminosuccinate + dihydroxyacetone phosphate = quinolinate + phosphate + 2 H2O + H(+). Its pathway is cofactor biosynthesis; NAD(+) biosynthesis; quinolinate from iminoaspartate: step 1/1. Functionally, catalyzes the condensation of iminoaspartate with dihydroxyacetone phosphate to form quinolinate. In Hahella chejuensis (strain KCTC 2396), this protein is Quinolinate synthase.